An 898-amino-acid chain; its full sequence is Magnesium-transporting ATPase, P-type 1 (898 aa).

The Cytoplasmic portion of the chain corresponds to 1–94; the sequence is MFKEIFTRLI…QPSPWWVHLW (94 aa). The helical transmembrane segment at 95-115 threads the bilayer; it reads VCYRNPFNILLTILGAISYAT. A topological domain (extracellular) is located at residue Glu116. Residues 117–137 traverse the membrane as a helical segment; the sequence is DLFAAGVIALMVAISTLLNFI. Over 138-287 the chain is Cytoplasmic; that stretch reads QEARSTKAAD…PNAFQQGISR (150 aa). The chain crosses the membrane as a helical span at residues 288–308; it reads VSMLLIRFMLVMAPVVLLING. Residues 309–317 lie on the Extracellular side of the membrane; it reads YTKGDWWEA. Residues 318-335 traverse the membrane as a helical segment; that stretch reads ALFALSVAVGLTPEMLPM. Mg(2+) is bound at residue Glu331. The Cytoplasmic portion of the chain corresponds to 336–695; it reads IVTSTLARGA…IEGRRTFANM (360 aa). Asp373 functions as the 4-aspartylphosphate intermediate in the catalytic mechanism. The Mg(2+) site is built by Asp641, Asp645, and Asn709. Residues 696-715 form a helical membrane-spanning segment; the sequence is LKYIKMTASSNFGNVFSVLV. The Extracellular segment spans residues 716–724; it reads ASAFLPFLP. The helical transmembrane segment at 725–744 threads the bilayer; sequence MLPLHLLIQNLLYDVSQVAI. The Mg(2+) site is built by Asn734 and Asp738. Residues 745 to 766 lie on the Cytoplasmic side of the membrane; sequence PFDNVDDEQIQKPQRWNPADLG. A helical transmembrane segment spans residues 767 to 790; sequence RFMIFFGPISSIFDILTFCLMWWV. Over 791–799 the chain is Extracellular; that stretch reads FHANTPETQ. Residues 800–818 traverse the membrane as a helical segment; the sequence is TLFQSGWFVVGLLSQTLIV. The Cytoplasmic segment spans residues 819–831; sequence HMIRTRRVPFIQS. The chain crosses the membrane as a helical span at residues 832 to 851; the sequence is CASWPLMIMTVIVMIVGIAL. The Extracellular segment spans residues 852 to 866; that stretch reads PFSPLASYLQLQALP. The helical transmembrane segment at 867-886 threads the bilayer; sequence LSYFPWLVAILAGYMTLTQL. Over 887–898 the chain is Cytoplasmic; sequence VKGFYSRRYGWQ.

Belongs to the cation transport ATPase (P-type) (TC 3.A.3) family. Type IIIB subfamily.

Its subcellular location is the cell inner membrane. It catalyses the reaction Mg(2+)(out) + ATP + H2O = Mg(2+)(in) + ADP + phosphate + H(+). Mediates magnesium influx to the cytosol. The chain is Magnesium-transporting ATPase, P-type 1 (mgtA) from Escherichia coli O157:H7.